The chain runs to 251 residues: ATP synthase subunit a (251 aa).

The next 5 helical transmembrane spans lie at 34 to 54 (VFLT…AASS), 93 to 113 (FVGT…LVPF), 130 to 150 (INTT…AGFS), 195 to 215 (LVVG…VMAL), and 216 to 236 (GLFT…AYIG).

The protein belongs to the ATPase A chain family. F-type ATPases have 2 components, CF(1) - the catalytic core - and CF(0) - the membrane proton channel. CF(1) has five subunits: alpha(3), beta(3), gamma(1), delta(1), epsilon(1). CF(0) has four main subunits: a, b, b' and c.

It localises to the cellular thylakoid membrane. In terms of biological role, key component of the proton channel; it plays a direct role in the translocation of protons across the membrane. This Nostoc sp. (strain PCC 7120 / SAG 25.82 / UTEX 2576) protein is ATP synthase subunit a.